A 296-amino-acid chain; its full sequence is Putative S-adenosyl-L-methionine-dependent methyltransferase MAP_3881 (296 aa).

Residues Asp-121 and Asp-150–Leu-151 contribute to the S-adenosyl-L-methionine site.

It belongs to the UPF0677 family.

Functionally, exhibits S-adenosyl-L-methionine-dependent methyltransferase activity. This Mycolicibacterium paratuberculosis (strain ATCC BAA-968 / K-10) (Mycobacterium paratuberculosis) protein is Putative S-adenosyl-L-methionine-dependent methyltransferase MAP_3881.